A 604-amino-acid chain; its full sequence is Kelch-like protein 15 (604 aa).

The BTB domain occupies 31-98 (LDVTLVIEDH…MYYGTIELSM (68 aa)). Residues 133–237 (CAEIMRLLDD…TPTSVFEKVK (105 aa)) enclose the BACK domain. 5 Kelch repeats span residues 328–379 (FVFL…VIGK), 381–426 (IYAV…VLNN), 428–473 (LFIT…NKSK), 489–542 (KLYV…VLDK), and 544–590 (IMVL…VCNL).

In terms of assembly, homodimer. Dimerization does not affect PPP2R5B-binding, but is required for its proteasomal degradation. Interacts with CUL3. Directly interacts with PPP2R5B; this interaction leads to PPP2R5B proteasomal degradation. Interacts with RBBP8/CtIP; this interaction leads to RBBP8 proteasomal degradation. Interacts with PACMP micropeptide; interaction prevents ubiquitination and degradation of RBBP8/CtIP.

It is found in the nucleus. Its pathway is protein modification; protein ubiquitination. Substrate-specific adapter for CUL3 E3 ubiquitin-protein ligase complex. Acts as an adapter for CUL3 to target the serine/threonine-protein phosphatase 2A (PP2A) subunit PPP2R5B for ubiquitination and subsequent proteasomal degradation, thus promoting exchange with other regulatory subunits. Acts as an adapter for CUL3 to target the DNA-end resection factor RBBP8/CtIP for ubiquitination and subsequent proteasomal degradation. Through the regulation of RBBP8/CtIP protein turnover, plays a key role in DNA damage response, favoring DNA double-strand repair through error-prone non-homologous end joining (NHEJ) over error-free, RBBP8-mediated homologous recombination (HR). The sequence is that of Kelch-like protein 15 (KLHL15) from Homo sapiens (Human).